A 453-amino-acid polypeptide reads, in one-letter code: V-type proton ATPase subunit B (453 aa).

Arginine 341 is an ATP binding site.

It belongs to the ATPase alpha/beta chains family. In terms of assembly, V-ATPase is a heteromultimeric enzyme made up of two complexes: the ATP-hydrolytic V1 complex and the proton translocation V0 complex. The V1 complex consists of three catalytic AB heterodimers that form a heterohexamer, three peripheral stalks each consisting of EG heterodimers, one central rotor including subunits D and F, and the regulatory subunits C and H. The proton translocation complex V0 consists of the proton transport subunit a, a ring of proteolipid subunits c9c'', rotary subunit d, subunits e and f, and two accessory subunits.

Non-catalytic subunit of the V1 complex of vacuolar(H+)-ATPase (V-ATPase), a multisubunit enzyme composed of a peripheral complex (V1) that hydrolyzes ATP and a membrane integral complex (V0) that translocates protons. V-ATPase is responsible for acidifying and maintaining the pH of intracellular compartments and in some cell types, is targeted to the plasma membrane, where it is responsible for acidifying the extracellular environment. Essential for the proper assembly and activity of V-ATPase. The sequence is that of V-type proton ATPase subunit B (ATP6V1B) from Gallus gallus (Chicken).